Consider the following 517-residue polypeptide: Ribonuclease Y (517 aa).

Residues 1–21 (MIEFLIGLIAAVVGILVGYLI) form a helical membrane-spanning segment. Residues 207 to 271 (LINVVNIKND…IAVRTVELLV (65 aa)) enclose the KH domain. The HD domain occupies 333 to 426 (ALIHSLEVAH…VCTADVLSAA (94 aa)).

This sequence belongs to the RNase Y family.

The protein localises to the cell membrane. In terms of biological role, endoribonuclease that initiates mRNA decay. This chain is Ribonuclease Y, found in Campylobacter hominis (strain ATCC BAA-381 / DSM 21671 / CCUG 45161 / LMG 19568 / NCTC 13146 / CH001A).